An 84-amino-acid chain; its full sequence is UPF0291 protein SMU_447 (84 aa).

Residues 57-84 (EGNDITPAKLKEIQRQKGIHGRKPEDNS) are disordered.

Belongs to the UPF0291 family.

It localises to the cytoplasm. The polypeptide is UPF0291 protein SMU_447 (Streptococcus mutans serotype c (strain ATCC 700610 / UA159)).